Consider the following 119-residue polypeptide: Large ribosomal subunit protein bL20 (119 aa).

It belongs to the bacterial ribosomal protein bL20 family.

In terms of biological role, binds directly to 23S ribosomal RNA and is necessary for the in vitro assembly process of the 50S ribosomal subunit. It is not involved in the protein synthesizing functions of that subunit. The protein is Large ribosomal subunit protein bL20 of Halorhodospira halophila (strain DSM 244 / SL1) (Ectothiorhodospira halophila (strain DSM 244 / SL1)).